We begin with the raw amino-acid sequence, 224 residues long: MKKLLLIAATSATMLSSTLSFADGMDNEWYLRIGAGAAMFNKEKDEATSVKLKSNMTVSVDLGIGYYFSKNFRTDLTLGTIIGGKLKKSGTATNVPFSGTNVSVSYKPTITRLLINGYVDLTNFNIFDVFAGAGVGPALVKEKITYNGITGLASTTKNRTNISYKLTLGTSAQIADDVKVELAYSWINDGKAKSKNVVYQGQKVQIGGMRYQSHNLTASIRFDI.

The first 22 residues, 1-22 (MKKLLLIAATSATMLSSTLSFA), serve as a signal peptide directing secretion.

This Rickettsia canadensis (strain McKiel) protein is Putative adhesin A1E_05320.